A 169-amino-acid chain; its full sequence is Probable metallophosphoesterase YsnB (169 aa).

7 residues coordinate Mn(2+): D8, H10, D35, N54, H78, H107, and H109.

It belongs to the metallophosphoesterase superfamily. YfcE family. It depends on Mn(2+) as a cofactor.

The polypeptide is Probable metallophosphoesterase YsnB (ysnB) (Bacillus subtilis (strain 168)).